The following is a 221-amino-acid chain: MEPLTHPLLDEATVSQLRATLLADETSWQDGRKTAGYQAAEVKNNLQLDRNSKTAKENSQLVIKQLESDPLVKSFALPRHIHGVMFSRSGIGQGYGMHVDNAYMSSGRSDLSFTLFLNEPESYEGGALCIQTLQDSKQVKLPAGQVIIYPSTSLHAVETVTAGERLVCVGWIQSYISSNEDRTILFGLNAGARALLAEHGRSPELDLIFQAYTNLLRRLGS.

The Fe2OG dioxygenase domain maps to 80–174 (HIHGVMFSRS…RLVCVGWIQS (95 aa)). Histidine 98, aspartate 100, and histidine 155 together coordinate Fe cation. Arginine 165 serves as a coordination point for 2-oxoglutarate.

The cofactor is Fe(2+). L-ascorbate is required as a cofactor.

This is PKHD-type hydroxylase PMT_0286 from Prochlorococcus marinus (strain MIT 9313).